The sequence spans 297 residues: TATA-box-binding protein (297 aa).

A disordered region spans residues 52-116; that stretch reads EEQQRQQQQA…ITPATPASES (65 aa). Low complexity-rich tracts occupy residues 56 to 78 and 104 to 114; these read RQQQQAQQSTSQQGNQGSGQTPQ and MTPITPATPAS. 2 tandem repeats follow at residues 123–199 and 213–290.

Belongs to the TBP family. Belongs to the TFIID complex together with the TBP-associated factors (TAFs). Binds DNA as monomer. Post-translationally, the N-terminal domain is extensively phosphorylated.

Its subcellular location is the nucleus. Functionally, general transcription factor that functions at the core of the DNA-binding multiprotein factor TFIID. Binding of TFIID to the TATA box is the initial transcriptional step of the pre-initiation complex (PIC), playing a role in the activation of eukaryotic genes transcribed by RNA polymerase II. Members of the TBP family are differentially required to regulate transcription and development during early embryogenesis. Binds to the promoters of select genes. This chain is TATA-box-binding protein, found in Xenopus tropicalis (Western clawed frog).